Here is a 259-residue protein sequence, read N- to C-terminus: Malonyl-[acyl-carrier protein] O-methyltransferase 2 (259 aa).

Belongs to the methyltransferase superfamily.

It carries out the reaction malonyl-[ACP] + S-adenosyl-L-methionine = malonyl-[ACP] methyl ester + S-adenosyl-L-homocysteine. The protein operates within cofactor biosynthesis; biotin biosynthesis. Functionally, converts the free carboxyl group of a malonyl-thioester to its methyl ester by transfer of a methyl group from S-adenosyl-L-methionine (SAM). It allows to synthesize pimeloyl-ACP via the fatty acid synthetic pathway. The polypeptide is Malonyl-[acyl-carrier protein] O-methyltransferase 2 (Ilyobacter polytropus (strain ATCC 51220 / DSM 2926 / LMG 16218 / CuHBu1)).